The primary structure comprises 533 residues: Cytochrome P450 monooxygenase calL (533 aa).

A helical membrane pass occupies residues 8–28 (TQLALLVWGIAVCVTLAIVVP). An N-linked (GlcNAc...) asparagine glycan is attached at Asn-33. The interval 123-148 (GKFKQDQSGRSKNPVPGHDVKPGQPR) is disordered. Asn-388 carries N-linked (GlcNAc...) asparagine glycosylation. Cys-467 provides a ligand contact to heme.

The protein belongs to the cytochrome P450 family. It depends on heme as a cofactor.

The protein resides in the membrane. It functions in the pathway secondary metabolite biosynthesis. In terms of biological role, cytochrome P450 monooxygenase; part of the gene cluster that mediates the biosynthesis of calbistrin A and related compounds. Calbistrin A is a secondary metabolite with an interesting structure that was recently found to have bioactivity against leukemia cells. It consists of two polyketides linked by an ester bond: a bicyclic decalin containing polyketide and a linear 12 carbon dioic acid structure. The polyketide synthase calA is probably responsible for forming the decalin moiety. Because calA lacks a designated enoylreductase (ER) domain, the required activity is provided by the trans-enoyl reductase calK. Following release from the PKS, calF then probably catalyzes the oxidation and the subsequent Diels Alder cycloisomerization that lead to the formation of the decalin moiety. The decalin polyketide backbone includes two C-methyl groups, at C7 and C11 in backbone, of which the C7 position is probably methylated by the methyltransferase domain of calA. A candidate for adding the methyl group at C11, if not done by CalA, is the cluster methyltransferase calH. Several additional tailoring enzymes within the cluster could be involved in the modification of the decalin polyketide product. Those include the 3 cytochrome P450 monooxygenases CalE, CalG and CalL, of which one might be responsible for the introduction of the extra hydroxyl group attached to the backbone of the decalin moiety, at position C9 in the backbone, that allows for attachment of the linear moiety. One tailoring enzyme activity that is expected to be involved in biosynthesis of calbistrin is an acyltransferase for connecting the two polyketide synthase products, and which could be performed by the cluster acyltransferase calJ. The enzyme responsible for the biosynthesis of the linear moiety, probably a second PKS, has not been identified yet. This Penicillium decumbens protein is Cytochrome P450 monooxygenase calL.